The following is a 283-amino-acid chain: Hydrogenase expression/formation protein HoxQ (283 aa).

Residues 1 to 29 (MNDDLPILPPGFGPGSHGEEERPDCPSMP) are disordered.

The protein belongs to the HupH/HyaF family.

The chain is Hydrogenase expression/formation protein HoxQ (hoxQ) from Azotobacter vinelandii.